The sequence spans 303 residues: Pyridoxal 5'-phosphate synthase subunit PdxS (303 aa).

D-ribose 5-phosphate is bound at residue Asp33. Lys90 (schiff-base intermediate with D-ribose 5-phosphate) is an active-site residue. Gly162 lines the D-ribose 5-phosphate pocket. Arg174 is a D-glyceraldehyde 3-phosphate binding site. Residues Gly223 and 244-245 (GS) contribute to the D-ribose 5-phosphate site.

The protein belongs to the PdxS/SNZ family. In the presence of PdxT, forms a dodecamer of heterodimers.

It catalyses the reaction aldehydo-D-ribose 5-phosphate + D-glyceraldehyde 3-phosphate + L-glutamine = pyridoxal 5'-phosphate + L-glutamate + phosphate + 3 H2O + H(+). Its pathway is cofactor biosynthesis; pyridoxal 5'-phosphate biosynthesis. In terms of biological role, catalyzes the formation of pyridoxal 5'-phosphate from ribose 5-phosphate (RBP), glyceraldehyde 3-phosphate (G3P) and ammonia. The ammonia is provided by the PdxT subunit. Can also use ribulose 5-phosphate and dihydroxyacetone phosphate as substrates, resulting from enzyme-catalyzed isomerization of RBP and G3P, respectively. In Mycobacterium avium (strain 104), this protein is Pyridoxal 5'-phosphate synthase subunit PdxS.